Reading from the N-terminus, the 2067-residue chain is Dedicator of cytokinesis protein 11 (2067 aa).

In terms of domain architecture, PH spans 162-269 (GVMKQGWLQK…WVNTIKQALL (108 aa)). Residues 274–302 (DRRNGSETSEGSLDDDSSSQGKPESITES) are disordered. Positions 291-302 (SSQGKPESITES) are enriched in polar residues. The 178-residue stretch at 643–820 (NNHLYIYPQQ…PLFKVRAYVA (178 aa)) folds into the C2 DOCK-type domain. The interval 1224-1267 (SSTIVDKEPSGSVTQNGLSRRGESRGSMYGDPGTPDINELHRRG) is disordered. A DOCKER domain is found at 1614–2040 (RSYASTPELR…LSEIIHEQIF (427 aa)).

This sequence belongs to the DOCK family.

Functionally, guanine nucleotide-exchange factor (GEF) that activates CDC42 by exchanging bound GDP for free GTP. This is Dedicator of cytokinesis protein 11 from Danio rerio (Zebrafish).